Reading from the N-terminus, the 438-residue chain is Putative hydrolase MSMEG_3995/MSMEI_3903 (438 aa).

Zn(2+) contacts are provided by Asp-95, Asp-104, Glu-143, and His-208. Lys-217 is covalently cross-linked (Isoglutamyl lysine isopeptide (Lys-Gln) (interchain with Q-Cter in protein Pup)). His-400 is a Zn(2+) binding site.

It belongs to the peptidase M20 family. It depends on Zn(2+) as a cofactor.

This is Putative hydrolase MSMEG_3995/MSMEI_3903 from Mycolicibacterium smegmatis (strain ATCC 700084 / mc(2)155) (Mycobacterium smegmatis).